We begin with the raw amino-acid sequence, 218 residues long: THAP domain-containing protein 3 (218 aa).

The THAP-type zinc finger occupies 1–82 (MPKSCAARQC…LKHNAVPTVF (82 aa)). 2 disordered regions span residues 97 to 120 (GGDS…PEGP) and 133 to 154 (ATEA…PGQP). S100 carries the post-translational modification Phosphoserine. The HCFC1-binding motif (HBM) motif lies at 156 to 159 (DHSY).

In terms of assembly, component of a THAP1/THAP3-HCFC1-OGT complex that contains at least, either THAP1 or THAP3, HCFC1 and OGT. Interacts directly with OGT and HCFC1 (via its HBM). Highest levels in heart, liver and kidney. Lower levels in brain and lung.

In terms of biological role, component of a THAP1/THAP3-HCFC1-OGT complex that is required for the regulation of the transcriptional activity of RRM1. The chain is THAP domain-containing protein 3 (Thap3) from Mus musculus (Mouse).